The chain runs to 1321 residues: Multidrug resistance protein pgp-1 (1321 aa).

The Cytoplasmic segment spans residues 1 to 77; sequence MLRNGSLRQS…YTTTLEKLLL (77 aa). Residues 77-381 enclose the ABC transmembrane type-1 1 domain; that stretch reads LFIGTLVAVI…AGPQLAVLGT (305 aa). Residues 78-98 traverse the membrane as a helical segment; it reads FIGTLVAVITGAGLPLMSILQ. N-linked (GlcNAc...) asparagine glycans are attached at residues N115 and N125. A helical membrane pass occupies residues 144-164; that stretch reads AMTVGMWAAGQITVTCYLYVA. N190 carries N-linked (GlcNAc...) asparagine glycosylation. The next 4 helical transmembrane spans lie at 213–233, 240–260, 321–341, and 350–370; these read KIGMAFQYLSQFITGFIVAFT, LVMLAVTPIQALCGFAIAKSM, ISFGAMQASNFISFALAFYIG, and LNFGDMLTTFSSVMMGSMALG. Topologically, residues 371 to 753 are cytoplasmic; sequence LAGPQLAVLG…LYHARPHALS (383 aa). The region spanning 416 to 652 is the ABC transporter 1 domain; that stretch reads ITVENVHFTY…QGLYYDLVTA (237 aa). 451-458 contributes to the ATP binding site; the sequence is GSSGCGKS. 2 helical membrane passes run 754–774 and 798–818; these read LFIGMSTATIGGFIYPTYSVF and LMFLVLAAAQGICSFLMTFFM. The 290-residue stretch at 754 to 1043 folds into the ABC transmembrane type-1 2 domain; the sequence is LFIGMSTATI…ATSYFPEYAK (290 aa). A glycan (N-linked (GlcNAc...) asparagine) is linked at N850. Helical transmembrane passes span 874–894, 895–915, 978–998, and 1017–1037; these read FSTVITTLVSMVAGIGLAFFY, GWQMALLIIAILPIVAFGQYL, IQGLSYGCASSVLYLLNTCAY, and VLRVMYAITISTSTLGFATSY. The Cytoplasmic portion of the chain corresponds to 1038–1321; that stretch reads FPEYAKATFA…LTQKQMTEKK (284 aa). Residues 1077 to 1315 form the ABC transporter 2 domain; sequence VIFKNVRFAY…KGAYYKLTQK (239 aa). ATP is bound at residue 1112–1119; that stretch reads GPSGCGKS.

This sequence belongs to the ABC transporter superfamily. ABCB family. Multidrug resistance exporter (TC 3.A.1.201) subfamily. In terms of tissue distribution, intestinal cells.

It localises to the membrane. The enzyme catalyses ATP + H2O + xenobioticSide 1 = ADP + phosphate + xenobioticSide 2.. Energy-dependent efflux pump responsible for decreased drug accumulation in multidrug-resistant cells. In Caenorhabditis elegans, this protein is Multidrug resistance protein pgp-1 (pgp-1).